The primary structure comprises 525 residues: Ent-kaurene oxidase (525 aa).

The helical transmembrane segment at 31-51 threads the bilayer; sequence VHWLIYVAFGAWLCSYVIHVL. Cys466 contacts heme.

It belongs to the cytochrome P450 family. Requires heme as cofactor.

It is found in the membrane. It carries out the reaction ent-kaur-16-ene + 3 reduced [NADPH--hemoprotein reductase] + 3 O2 = ent-kaur-16-en-19-oate + 3 oxidized [NADPH--hemoprotein reductase] + 4 H2O + 4 H(+). It functions in the pathway plant hormone biosynthesis; gibberellin biosynthesis. Its function is as follows. Catalyzes three successive oxidations of the 4-methyl group of ent-kaurene giving kaurenoic acid, a key step in gibberellin (GA) biosynthesis. The chain is Ent-kaurene oxidase (CYP503A1) from Gibberella intermedia (Bulb rot disease fungus).